A 776-amino-acid polypeptide reads, in one-letter code: Probable inorganic carbon transporter subunit DabA (776 aa).

4 residues coordinate Zn(2+): cysteine 313, aspartate 315, histidine 473, and cysteine 488.

This sequence belongs to the inorganic carbon transporter (TC 9.A.2) DabA family. Forms a complex with DabB. It depends on Zn(2+) as a cofactor.

Its subcellular location is the cell inner membrane. Its function is as follows. Part of an energy-coupled inorganic carbon pump. The sequence is that of Probable inorganic carbon transporter subunit DabA from Chromobacterium violaceum (strain ATCC 12472 / DSM 30191 / JCM 1249 / CCUG 213 / NBRC 12614 / NCIMB 9131 / NCTC 9757 / MK).